The primary structure comprises 340 residues: Protein-arginine kinase (340 aa).

Residues 21-242 enclose the Phosphagen kinase C-terminal domain; that stretch reads VVLSSRIRLA…EQIIMQERVA (222 aa). ATP is bound by residues 24-28, H79, R113, 164-168, and 195-200; these read SSRIR, RASVM, and RGIYGE.

The protein belongs to the ATP:guanido phosphotransferase family.

The enzyme catalyses L-arginyl-[protein] + ATP = N(omega)-phospho-L-arginyl-[protein] + ADP + H(+). In terms of biological role, catalyzes the specific phosphorylation of arginine residues in proteins. The polypeptide is Protein-arginine kinase (Listeria monocytogenes serotype 4b (strain F2365)).